The following is a 793-amino-acid chain: Protocadherin beta-7 (793 aa).

Residues 1–26 form the signal peptide; the sequence is MEARVERAVQKRQVLFLCVFLGMSWA. The Extracellular portion of the chain corresponds to 27 to 688; that stretch reads GAEPLRYFVA…DQANLLTVYL (662 aa). Cadherin domains are found at residues 35 to 133, 138 to 242, 247 to 347, 352 to 451, and 456 to 561; these read VAEE…APVF, ISLK…APDF, YKVQ…RPEL, LTSP…APAF, and YTLF…SPFV. A glycan (N-linked (GlcNAc...) asparagine) is linked at N169. 2 N-linked (GlcNAc...) asparagine glycosylation sites follow: N418 and N436. An N-linked (GlcNAc...) asparagine glycan is attached at N567. A Cadherin 6 domain is found at 568–671; the sequence is SSAPCTEPLP…LVDGFSQPYL (104 aa). A helical transmembrane segment spans residues 689-709; sequence VVALASVSSLFLLSVLLFVAV. At 710–793 the chain is on the cytoplasmic side; that stretch reads RLCRRSRAAP…NRPFQNNLGF (84 aa).

Its subcellular location is the cell membrane. Functionally, potential calcium-dependent cell-adhesion protein. May be involved in the establishment and maintenance of specific neuronal connections in the brain. This chain is Protocadherin beta-7 (PCDHB7), found in Pan troglodytes (Chimpanzee).